Reading from the N-terminus, the 694-residue chain is Elongation factor G (694 aa).

Residues 9–288 enclose the tr-type G domain; it reads SKIRNIGIMA…VIVKWLPSPK (280 aa). GTP-binding positions include 18–25, 82–86, and 136–139; these read AHIDAGKT, DTPGH, and NKMD.

The protein belongs to the TRAFAC class translation factor GTPase superfamily. Classic translation factor GTPase family. EF-G/EF-2 subfamily.

The protein resides in the cytoplasm. In terms of biological role, catalyzes the GTP-dependent ribosomal translocation step during translation elongation. During this step, the ribosome changes from the pre-translocational (PRE) to the post-translocational (POST) state as the newly formed A-site-bound peptidyl-tRNA and P-site-bound deacylated tRNA move to the P and E sites, respectively. Catalyzes the coordinated movement of the two tRNA molecules, the mRNA and conformational changes in the ribosome. In Chlamydia felis (strain Fe/C-56) (Chlamydophila felis), this protein is Elongation factor G.